Here is an 87-residue protein sequence, read N- to C-terminus: HssA/B-like protein 8 (87 aa).

Residues Met-1–Ala-22 show a composition bias toward polar residues. The disordered stretch occupies residues Met-1–Gly-24.

It belongs to the hssA/B family.

This is HssA/B-like protein 8 (hssl8) from Dictyostelium discoideum (Social amoeba).